The sequence spans 524 residues: Light-independent protochlorophyllide reductase subunit B (524 aa).

Aspartate 36 is a binding site for [4Fe-4S] cluster. Catalysis depends on aspartate 290, which acts as the Proton donor. 425-426 (GL) is a substrate binding site.

The protein belongs to the ChlB/BchB/BchZ family. In terms of assembly, protochlorophyllide reductase is composed of three subunits; ChlL, ChlN and ChlB. Forms a heterotetramer of two ChlB and two ChlN subunits. It depends on [4Fe-4S] cluster as a cofactor.

The enzyme catalyses chlorophyllide a + oxidized 2[4Fe-4S]-[ferredoxin] + 2 ADP + 2 phosphate = protochlorophyllide a + reduced 2[4Fe-4S]-[ferredoxin] + 2 ATP + 2 H2O. It functions in the pathway porphyrin-containing compound metabolism; chlorophyll biosynthesis (light-independent). Functionally, component of the dark-operative protochlorophyllide reductase (DPOR) that uses Mg-ATP and reduced ferredoxin to reduce ring D of protochlorophyllide (Pchlide) to form chlorophyllide a (Chlide). This reaction is light-independent. The NB-protein (ChlN-ChlB) is the catalytic component of the complex. This chain is Light-independent protochlorophyllide reductase subunit B, found in Parasynechococcus marenigrum (strain WH8102).